We begin with the raw amino-acid sequence, 235 residues long: tRNA (guanine-N(1)-)-methyltransferase (235 aa).

Residues Gly112 and 132–137 each bind S-adenosyl-L-methionine; that span reads IGDYVI.

Belongs to the RNA methyltransferase TrmD family. Homodimer.

It is found in the cytoplasm. The enzyme catalyses guanosine(37) in tRNA + S-adenosyl-L-methionine = N(1)-methylguanosine(37) in tRNA + S-adenosyl-L-homocysteine + H(+). In terms of biological role, specifically methylates guanosine-37 in various tRNAs. This Anaplasma marginale (strain St. Maries) protein is tRNA (guanine-N(1)-)-methyltransferase.